The chain runs to 142 residues: Heat shock protein HSP.16.4 (142 aa).

One can recognise a sHSP domain in the interval 27–142 (NLFNDLKSNL…KEIKTSIPIE (116 aa)).

It belongs to the small heat shock protein (HSP20) family.

Its subcellular location is the cytoplasm. This Streptococcus thermophilus protein is Heat shock protein HSP.16.4.